The primary structure comprises 380 residues: MTYDLPPLREPDLPRTAKVRPVALRTGWTTGACATAATKAALTALVTGVSPEQVEIGLPAGRRVCFPVARCDRTADGVEAVVVKDAGDDPDVTHGAELTATVGWRWVPGLALEGGPGVGTVTKPGLGLTVGGPAINDTPRRMIGEAVAEVVDLAVVGVRVVISVPRGEIMARKTTNRRLGIIGGISILGTTGVVRPFSTASWRASVVQAVQVAAAQGEQTVVLCTGGRTERAARELLPELPEVCFVEVGDFTGAAVTAAVTHGLSGVAFVGMAGKLAKLAAGVLMTHYTRSKVDLSLLGAVTVEAGGSADLAAAVTAANTGRHAYELWEAAGLLGPAGDLLCRRVRTVLRRFAGDAVTVDVAMVDFAGARRVAASGRWSQ.

This sequence belongs to the CbiD family.

It catalyses the reaction Co-precorrin-5B + S-adenosyl-L-methionine = Co-precorrin-6A + S-adenosyl-L-homocysteine. It functions in the pathway cofactor biosynthesis; adenosylcobalamin biosynthesis; cob(II)yrinate a,c-diamide from sirohydrochlorin (anaerobic route): step 6/10. Its function is as follows. Catalyzes the methylation of C-1 in cobalt-precorrin-5B to form cobalt-precorrin-6A. The chain is Cobalt-precorrin-5B C(1)-methyltransferase from Salinispora tropica (strain ATCC BAA-916 / DSM 44818 / JCM 13857 / NBRC 105044 / CNB-440).